We begin with the raw amino-acid sequence, 512 residues long: ATP synthase subunit alpha, chloroplastic (512 aa).

170-177 provides a ligand contact to ATP; the sequence is GDRQTGKT.

This sequence belongs to the ATPase alpha/beta chains family. As to quaternary structure, F-type ATPases have 2 components, CF(1) - the catalytic core - and CF(0) - the membrane proton channel. CF(1) has five subunits: alpha(3), beta(3), gamma(1), delta(1), epsilon(1). CF(0) has four main subunits: a, b, b' and c.

The protein resides in the plastid. It localises to the chloroplast thylakoid membrane. The catalysed reaction is ATP + H2O + 4 H(+)(in) = ADP + phosphate + 5 H(+)(out). Functionally, produces ATP from ADP in the presence of a proton gradient across the membrane. The alpha chain is a regulatory subunit. The chain is ATP synthase subunit alpha, chloroplastic from Staurastrum punctulatum (Green alga).